Here is a 96-residue protein sequence, read N- to C-terminus: Ferredoxin (96 aa).

Positions Tyr4–Glu94 constitute a 2Fe-2S ferredoxin-type domain. Positions 40, 45, 48, and 78 each coordinate [2Fe-2S] cluster.

The protein belongs to the 2Fe2S plant-type ferredoxin family. The cofactor is [2Fe-2S] cluster.

Its subcellular location is the plastid. It is found in the chloroplast. Ferredoxins are iron-sulfur proteins that transfer electrons in a wide variety of metabolic reactions. The protein is Ferredoxin of Panax ginseng (Korean ginseng).